The following is a 582-amino-acid chain: Enhancer of polycomb-like protein 1 (582 aa).

Positions Arg-238–Asn-295 form a coiled coil. The interval Pro-323–Gly-351 is disordered. Residues Thr-352–Lys-385 adopt a coiled-coil conformation. Low complexity predominate over residues Ala-539–Gln-555. The disordered stretch occupies residues Ala-539–Ser-582.

This sequence belongs to the enhancer of polycomb family. In terms of assembly, component of the NuA4 histone acetyltransferase complex.

It is found in the nucleus. In terms of biological role, component of the NuA4 histone acetyltransferase complex which is involved in transcriptional activation of selected genes principally by acetylation of nucleosomal histone H4 and H2A. The NuA4 complex is also involved in DNA repair. Involved in gene silencing by neighboring heterochromatin, blockage of the silencing spreading along the chromosome, and required for cell cycle progression through G2/M. The sequence is that of Enhancer of polycomb-like protein 1 (epl1) from Aspergillus fumigatus (strain ATCC MYA-4609 / CBS 101355 / FGSC A1100 / Af293) (Neosartorya fumigata).